The following is an 862-amino-acid chain: FAS1 domain-containing protein YLR001C (862 aa).

Residues 1-23 (MNMAIQTIKYIFWLLPILGLTQA) form the signal peptide. The Vacuolar portion of the chain corresponds to 24-762 (LLQNPGDDFP…KYHLRLPGIA (739 aa)). The 129-residue stretch at 34–162 (FSTVIDILSE…ASLQGINNLL (129 aa)) folds into the FAS1 1 domain. Asparagine 68, asparagine 112, asparagine 152, asparagine 200, asparagine 291, asparagine 333, asparagine 450, asparagine 521, asparagine 542, asparagine 569, asparagine 663, asparagine 679, and asparagine 688 each carry an N-linked (GlcNAc...) asparagine glycan. FAS1 domains are found at residues 463–604 (PGDL…DQLD) and 606–744 (PVDL…DKPI). A helical transmembrane segment spans residues 763–783 (VGFGVIIGVTIAISLLFCIII). Over 784-862 (TRGGKVKDKN…QKGGRSVSTS (79 aa)) the chain is Cytoplasmic.

It localises to the vacuole membrane. The sequence is that of FAS1 domain-containing protein YLR001C from Saccharomyces cerevisiae (strain ATCC 204508 / S288c) (Baker's yeast).